Here is a 345-residue protein sequence, read N- to C-terminus: Phosphoribosylformylglycinamidine cyclo-ligase (345 aa).

Belongs to the AIR synthase family.

Its subcellular location is the cytoplasm. It carries out the reaction 2-formamido-N(1)-(5-O-phospho-beta-D-ribosyl)acetamidine + ATP = 5-amino-1-(5-phospho-beta-D-ribosyl)imidazole + ADP + phosphate + H(+). The protein operates within purine metabolism; IMP biosynthesis via de novo pathway; 5-amino-1-(5-phospho-D-ribosyl)imidazole from N(2)-formyl-N(1)-(5-phospho-D-ribosyl)glycinamide: step 2/2. This is Phosphoribosylformylglycinamidine cyclo-ligase from Salmonella typhimurium (strain LT2 / SGSC1412 / ATCC 700720).